Here is a 492-residue protein sequence, read N- to C-terminus: V-type proton ATPase subunit B 2 (492 aa).

Belongs to the ATPase alpha/beta chains family. In terms of assembly, V-ATPase is a heteromultimeric enzyme composed of a peripheral catalytic V1 complex (main components: subunits A, B, C, D, E, and F) attached to an integral membrane V0 proton pore complex (main component: the proteolipid protein).

Functionally, non-catalytic subunit of the peripheral V1 complex of vacuolar ATPase. V-ATPase is responsible for acidifying a variety of intracellular compartments in eukaryotic cells. The protein is V-type proton ATPase subunit B 2 of Acetabularia acetabulum (Mermaid's wine glass).